A 446-amino-acid polypeptide reads, in one-letter code: 6-methylsalicylate 1-monooxygenase atA (446 aa).

A helical transmembrane segment spans residues 7–27 (VSVAIIGGGIGGLSLAIGLLQ). Positions 37 and 50 each coordinate FAD. An N-linked (GlcNAc...) asparagine glycan is attached at asparagine 107. Arginine 116 serves as a coordination point for FAD. Residue arginine 200 is part of the active site. The FAD site is built by aspartate 311 and alanine 324.

It belongs to the paxM FAD-dependent monooxygenase family. Requires FAD as cofactor.

Its subcellular location is the membrane. The catalysed reaction is 6-methylsalicylate + AH2 + O2 + H(+) = 3-methylcatechol + A + CO2 + H2O. It participates in secondary metabolite biosynthesis. Its function is as follows. 6-methylsalicylate 1-monooxygenase; part of the gene cluster that mediates the biosynthesis of terreic acid, a quinone epoxide inhibitor of Bruton's tyrosine kinase. The first step of the pathway is the synthesis of 6-methylsalicylic acid (6-MSA) by the 6-methylsalicylic acid synthase atX. In the biosynthesis of 6-MSA, atX utilizes one acetyl-CoA and three malonyl-CoAs as its substrates and catalyzes a series of programmed reactions including Claisen condensation, reduction, aldol cyclization, and the hydrolytic cleavage that yields 6-MSA. The 6-methylsalicylate 1-monooxygenase atA then catalyzes the decarboxylative hydroxylation of 6-MSA to 3-methylcatechol. The next step is the conversion of 3-methylcatechol to 3-methyl-1,2,4-benzenetriol by cytochrome P450 monooxygenase atE, which is enhanced by cytochrome P450 monooxygenase atG. Then, the epoxidase atD catalyzes the epoxidation and hydroxyl oxidation of 3-methyl-1,2,4-benzenetriol to terremutin. Lastly, GMC oxidoreductase atC oxidizes terremutin to terreic acid. This Aspergillus terreus (strain NIH 2624 / FGSC A1156) protein is 6-methylsalicylate 1-monooxygenase atA.